A 536-amino-acid chain; its full sequence is Protoporphyrinogen oxidase, chloroplastic (536 aa).

Residues 1–36 (MAAAAAAMATATSATAAPPLRIRDAARRTRRRGHVR) constitute a chloroplast transit peptide. FAD is bound by residues 62-67 (GGGISG), 87-88 (EA), and 111-114 (GPNS). The tract at residues 248–272 (TIKTIQERGKNPKPPRDPRLPTPKG) is disordered. The segment covering 252-266 (IQERGKNPKPPRDPR) has biased composition (basic and acidic residues). 510-512 (VAL) contacts FAD.

Belongs to the protoporphyrinogen/coproporphyrinogen oxidase family. Protoporphyrinogen oxidase subfamily. FAD serves as cofactor.

Its subcellular location is the plastid. It is found in the chloroplast. The catalysed reaction is protoporphyrinogen IX + 3 O2 = protoporphyrin IX + 3 H2O2. It functions in the pathway porphyrin-containing compound metabolism; protoporphyrin-IX biosynthesis; protoporphyrin-IX from protoporphyrinogen-IX: step 1/1. The protein operates within porphyrin-containing compound metabolism; chlorophyll biosynthesis. Its function is as follows. Catalyzes the 6-electron oxidation of protoporphyrinogen-IX to form protoporphyrin-IX. The protein is Protoporphyrinogen oxidase, chloroplastic (PPOX1) of Oryza sativa subsp. japonica (Rice).